We begin with the raw amino-acid sequence, 434 residues long: Gamma-glutamyl phosphate reductase (434 aa).

It belongs to the gamma-glutamyl phosphate reductase family.

The protein resides in the cytoplasm. It catalyses the reaction L-glutamate 5-semialdehyde + phosphate + NADP(+) = L-glutamyl 5-phosphate + NADPH + H(+). The protein operates within amino-acid biosynthesis; L-proline biosynthesis; L-glutamate 5-semialdehyde from L-glutamate: step 2/2. Functionally, catalyzes the NADPH-dependent reduction of L-glutamate 5-phosphate into L-glutamate 5-semialdehyde and phosphate. The product spontaneously undergoes cyclization to form 1-pyrroline-5-carboxylate. The protein is Gamma-glutamyl phosphate reductase of Rhodopirellula baltica (strain DSM 10527 / NCIMB 13988 / SH1).